We begin with the raw amino-acid sequence, 253 residues long: tRNA pseudouridine synthase A (253 aa).

Catalysis depends on D53, which acts as the Nucleophile. Y112 contributes to the substrate binding site.

Belongs to the tRNA pseudouridine synthase TruA family. In terms of assembly, homodimer.

The enzyme catalyses uridine(38/39/40) in tRNA = pseudouridine(38/39/40) in tRNA. In terms of biological role, formation of pseudouridine at positions 38, 39 and 40 in the anticodon stem and loop of transfer RNAs. The polypeptide is tRNA pseudouridine synthase A (Lactococcus lactis subsp. cremoris (strain SK11)).